Reading from the N-terminus, the 399-residue chain is Trimethyllysine dioxygenase (399 aa).

H214, D216, and H360 together coordinate Fe cation.

It belongs to the gamma-BBH/TMLD family. Fe(2+) is required as a cofactor. It depends on L-ascorbate as a cofactor.

The protein localises to the cytoplasm. It catalyses the reaction N(6),N(6),N(6)-trimethyl-L-lysine + 2-oxoglutarate + O2 = (3S)-3-hydroxy-N(6),N(6),N(6)-trimethyl-L-lysine + succinate + CO2. It functions in the pathway amine and polyamine biosynthesis; carnitine biosynthesis. Its function is as follows. Converts trimethyllysine (TML) into hydroxytrimethyllysine (HTML). This chain is Trimethyllysine dioxygenase, found in Meyerozyma guilliermondii (strain ATCC 6260 / CBS 566 / DSM 6381 / JCM 1539 / NBRC 10279 / NRRL Y-324) (Yeast).